Reading from the N-terminus, the 60-residue chain is Mastoparan-VT3 (60 aa).

A signal peptide spans 1-27; sequence MKNTILILFTAFIALLGFFGMSAEALA. AXPX repeat units lie at residues 27–30, 31–34, 35–38, and 41–44; these read ADPK, ADPL, AGPN, and ADPE. The propeptide occupies 28–45; the sequence is DPKADPLAGPNPDADPEA. Leu-59 carries the post-translational modification Leucine amide.

The protein belongs to the MCD family. Mastoparan subfamily. As to expression, expressed by the venom gland.

Its subcellular location is the secreted. Functionally, the synthetic peptide shows antimicrobial activities against Gram-negative bacteria (but not against all strains tested), Gram-positive bacteria (all strains tested) and the fungi C.albicans and C.parapsilosis. Exhibits moderate hemolytic activity (25% at 100 ug/ml) against washed human erythrocytes. This is Mastoparan-VT3 from Vespa tropica (Greater banded hornet).